The sequence spans 316 residues: MTLIAIFLAVLLDWLIGDPYSWPHPVKWMGSYIYLCMRLQEKKQFSPYLFGFFLWLTTVGLALGVSCGLLWLAGLAHPVLYWLVWIYLAYASLAAKSLAFEAQKVYHTLKFGTLEEARKQVGMIVGRETSQLTPEEISKATIETVAENTSDGVIGPLLCLFLGGPILAMTYKAINTLDSMVGYKTEKYRKIGLISAKMDDLANLIPARLTWLFLILSSQILLLDVKGALRIGWRDRYQHASPNSAFSEAVVAGALGIQLGGPHVYHGELIEKPTIGEDSRPVEADDIQTAISLLYTSTMTGLILFTLFYLVMQAYF.

5 consecutive transmembrane segments (helical) span residues F45 to V65, P78 to F100, D151 to Y171, L209 to L229, and I291 to V311.

The protein belongs to the CobD/CbiB family.

The protein resides in the cell membrane. Its pathway is cofactor biosynthesis; adenosylcobalamin biosynthesis. In terms of biological role, converts cobyric acid to cobinamide by the addition of aminopropanol on the F carboxylic group. The chain is Cobalamin biosynthesis protein CobD from Streptococcus sanguinis (strain SK36).